A 461-amino-acid chain; its full sequence is MADDQDLSEVEMSPVGSEDHHCLSPGPSMASDNSSHLASSGNGEMGKVKKEQQDSEADDDKFPVCIREAVSQVLSGYDWTLVPMPVRVNGSNKSKPHVKRPMNAFMVWAQAARRKLADQYPHLHNAELSKTLGKLWRLLNESDKRPFIEEAERLRMQHKKDHPDYKYQPRRRKNGKATQGEGEGQVEGEAGGAASIQAHYKNAHLDHRHPGEGSPMSDGHPEHSSGQSHGPPTPPTTPKTELQAGKADSKREGRSLGEGGKPHIDFGNVDIGEISHEVMSNMETFDVNEFDQYLPPNGHAGHPGHVGGYAAAAGYGLGSALAAASGHSAWISKQHGVSLSATTSPVVDSKAQVKTEGSAPGGHYTDQPSTSQIAYTSLSLPHYGSAFPSISRPQFDYPDHQPSGPYYSHSSQASGLYSAFSYMGPSQRPLYTAISDPAPSVPQSHSPTHWEQPVYTTLSRP.

Disordered regions lie at residues 1-60 (MADD…ADDD), 154-191 (LRMQ…GEAG), 205-268 (LDHR…DFGN), 350-369 (KAQV…DQPS), and 433-461 (AISD…LSRP). Residues 30 to 42 (ASDNSSHLASSGN) show a composition bias toward polar residues. The segment at 56–96 (EADDDKFPVCIREAVSQVLSGYDWTLVPMPVRVNGSNKSKP) is dimerization (DIM). Residues 98 to 166 (VKRPMNAFMV…QHKKDHPDYK (69 aa)) constitute a DNA-binding region (HMG box). Residues 154 to 167 (LRMQHKKDHPDYKY) are compositionally biased toward basic and acidic residues. Gly residues predominate over residues 181–191 (EGEGQVEGEAG). A transactivation domain (TAM) region spans residues 221 to 306 (PEHSSGQSHG…NGHAGHPGHV (86 aa)). Residues 247 to 264 (ADSKREGRSLGEGGKPHI) are compositionally biased toward basic and acidic residues. Positions 350–461 (KAQVKTEGSA…QPVYTTLSRP (112 aa)) are transactivation domain (TAC). The segment covering 441–461 (VPQSHSPTHWEQPVYTTLSRP) has biased composition (polar residues).

The protein resides in the cytoplasm. It localises to the nucleus. In terms of biological role, transcription factor that plays a central role in developing and mature glia. Specifically activates expression of myelin genes, during oligodendrocyte (OL) maturation, thereby playing a central role in oligodendrocyte maturation and CNS myelination. This is Transcription factor SOX-10 (SOX10) from Gallus gallus (Chicken).